Consider the following 636-residue polypeptide: Eisosome protein sle1 (636 aa).

Residues 1–297 (MSHASKNYNA…HVIIYENKEG (297 aa)) are required for targeting the protein to eisosomes. Disordered regions lie at residues 111–205 (ANYM…SPAN), 222–284 (YSPS…VPPV), 313–387 (DPSG…TQHF), 400–451 (QYYQ…QPSL), 467–550 (DITP…VNNA), and 572–604 (PSNH…RFAN). Polar residues-rich tracts occupy residues 131–159 (PSQQ…QSYQ), 166–178 (RTSQ…NNYS), 188–204 (RRSS…GSPA), 237–255 (SYNN…TQKS), and 315–354 (SGSN…VVSR). The segment covering 355-383 (SGQNNNQPAQPGQYNQQSQPVQSYQSGQS) has biased composition (low complexity). Polar residues-rich tracts occupy residues 400–412 (QYYQ…QPVQ) and 422–439 (PVQS…QPVQ). The segment covering 471–484 (TASSTTANNAYASA) has biased composition (low complexity). Residues 503–512 (SFERERDSGR) show a composition bias toward basic and acidic residues. A compositionally biased stretch (polar residues) spans 572–589 (PSNHAYSEGRSYTFTGGQ).

In terms of assembly, component of eisosomes, large cytoplasmic protein assemblies that localize to specialized domains termed MCCs on the plasma membrane.

It localises to the cytoplasm. It is found in the cell cortex. The protein resides in the cell tip. Functionally, important for the biogenesis of filamentous eisosomes, large cytoplasmic protein assemblies that localize to specialized domains on the plasma membrane to cluster specific proteins at sites of membrane invaginations. This chain is Eisosome protein sle1 (sle1), found in Schizosaccharomyces pombe (strain 972 / ATCC 24843) (Fission yeast).